The chain runs to 186 residues: Crossover junction endodeoxyribonuclease RuvC (186 aa).

Catalysis depends on residues D7, E73, and D145. Residues D7, E73, and D145 each contribute to the Mg(2+) site.

The protein belongs to the RuvC family. In terms of assembly, homodimer which binds Holliday junction (HJ) DNA. The HJ becomes 2-fold symmetrical on binding to RuvC with unstacked arms; it has a different conformation from HJ DNA in complex with RuvA. In the full resolvosome a probable DNA-RuvA(4)-RuvB(12)-RuvC(2) complex forms which resolves the HJ. It depends on Mg(2+) as a cofactor.

It localises to the cytoplasm. The enzyme catalyses Endonucleolytic cleavage at a junction such as a reciprocal single-stranded crossover between two homologous DNA duplexes (Holliday junction).. The RuvA-RuvB-RuvC complex processes Holliday junction (HJ) DNA during genetic recombination and DNA repair. Endonuclease that resolves HJ intermediates. Cleaves cruciform DNA by making single-stranded nicks across the HJ at symmetrical positions within the homologous arms, yielding a 5'-phosphate and a 3'-hydroxyl group; requires a central core of homology in the junction. The consensus cleavage sequence is 5'-(A/T)TT(C/G)-3'. Cleavage occurs on the 3'-side of the TT dinucleotide at the point of strand exchange. HJ branch migration catalyzed by RuvA-RuvB allows RuvC to scan DNA until it finds its consensus sequence, where it cleaves and resolves the cruciform DNA. The protein is Crossover junction endodeoxyribonuclease RuvC of Acidovorax sp. (strain JS42).